Consider the following 716-residue polypeptide: ATP-dependent zinc metalloprotease FTSH 1, chloroplastic (716 aa).

The transit peptide at 1-48 directs the protein to the chloroplast; that stretch reads MASNSLLRSSSNFFLGSHIIISSPTPKTTRKPSFPFSFVSRAKYQITR. A thylakoid-targeting transit peptide spans 49–86; that stretch reads SSQDENSPNGKPNSPFSSQVALAAILLSSISSSPLALA. A helical membrane pass occupies residues 204–224; it reads FTVIGNLIFPLLAFGGLFLLF. 302–309 is a binding site for ATP; it reads GPPGTGKT. Residue His524 participates in Zn(2+) binding. Glu525 is a catalytic residue. The Zn(2+) site is built by His528 and Asp605.

This sequence in the N-terminal section; belongs to the AAA ATPase family. In the C-terminal section; belongs to the peptidase M41 family. Interacts with CHIP and HSP70. Heterohexamers with FTSH2, FTSH5 and FTSH8. Requires Zn(2+) as cofactor. In terms of processing, the FTSH1 precursor is ubiquitinated by CHIP in the cytoplasm. In terms of tissue distribution, ubiquitous.

The protein resides in the plastid. Its subcellular location is the chloroplast thylakoid membrane. In terms of biological role, part of a complex that function as an ATP-dependent zinc metallopeptidase. Involved in the thylakoid formation and in the removal of damaged D1 in the photosystem II, preventing cell death under high-intensity light conditions. The sequence is that of ATP-dependent zinc metalloprotease FTSH 1, chloroplastic (FTSH1) from Arabidopsis thaliana (Mouse-ear cress).